The primary structure comprises 183 residues: Hypoxanthine/guanine phosphoribosyltransferase (183 aa).

Belongs to the purine/pyrimidine phosphoribosyltransferase family. Archaeal HPRT subfamily. Homodimer.

The protein localises to the cytoplasm. The enzyme catalyses IMP + diphosphate = hypoxanthine + 5-phospho-alpha-D-ribose 1-diphosphate. It carries out the reaction GMP + diphosphate = guanine + 5-phospho-alpha-D-ribose 1-diphosphate. Its pathway is purine metabolism; IMP biosynthesis via salvage pathway; IMP from hypoxanthine: step 1/1. Functionally, catalyzes a salvage reaction resulting in the formation of IMP that is energically less costly than de novo synthesis. This is Hypoxanthine/guanine phosphoribosyltransferase from Methanocaldococcus infernus (strain DSM 11812 / JCM 15783 / ME).